A 253-amino-acid polypeptide reads, in one-letter code: Tryptophan synthase alpha chain (253 aa).

Residues Glu47 and Asp58 each act as proton acceptor in the active site.

The protein belongs to the TrpA family. In terms of assembly, tetramer of two alpha and two beta chains.

The enzyme catalyses (1S,2R)-1-C-(indol-3-yl)glycerol 3-phosphate + L-serine = D-glyceraldehyde 3-phosphate + L-tryptophan + H2O. Its pathway is amino-acid biosynthesis; L-tryptophan biosynthesis; L-tryptophan from chorismate: step 5/5. In terms of biological role, the alpha subunit is responsible for the aldol cleavage of indoleglycerol phosphate to indole and glyceraldehyde 3-phosphate. This is Tryptophan synthase alpha chain from Lactococcus lactis subsp. cremoris (strain SK11).